The primary structure comprises 492 residues: Polyamine oxidase 5 (492 aa).

Glutamate 55, arginine 63, valine 244, and glutamate 431 together coordinate FAD. Residues 490–492 (SRL) carry the Microbody targeting signal motif.

Belongs to the flavin monoamine oxidase family. Requires FAD as cofactor. In terms of tissue distribution, widely expressed.

The protein localises to the peroxisome. It catalyses the reaction spermine + O2 + H2O = 3-aminopropanal + spermidine + H2O2. The enzyme catalyses norspermine + O2 + H2O = norspermidine + 3-aminopropanal + H2O2. It carries out the reaction thermospermine + O2 + H2O = 3-aminopropanal + spermidine + H2O2. It functions in the pathway amine and polyamine degradation; spermine degradation. Flavoenzyme involved in polyamine back-conversion. Catalyzes the oxidation of the secondary amino group of polyamines, such as spermine. Substrate preference is spermine &gt; thermospermine &gt; norspermine. No activity detected when putrescine, spermidine or N(1)-acetylspermidine are used as substrates. Plays an important role in the regulation of polyamine intracellular concentration. May play a role in producing hydrogen peroxide during seed germination. The polypeptide is Polyamine oxidase 5 (Oryza sativa subsp. japonica (Rice)).